The following is a 507-amino-acid chain: Tabersonine/lochnericine 19-hydroxylase (507 aa).

Residues 8-28 (FFVLLLPFFIGIAFIYKLWNF) form a helical membrane-spanning segment. The N-linked (GlcNAc...) asparagine glycan is linked to Asn-167. Position 447 (Cys-447) interacts with heme.

The protein belongs to the cytochrome P450 family. Heme is required as a cofactor. As to expression, confined to roots.

Its subcellular location is the endoplasmic reticulum membrane. The enzyme catalyses (-)-tabersonine + reduced [NADPH--hemoprotein reductase] + O2 = (-)-(R)-19-hydroxytabersonine + oxidized [NADPH--hemoprotein reductase] + H2O + H(+). It catalyses the reaction lochnericine + reduced [NADPH--hemoprotein reductase] + O2 = horhammericine + oxidized [NADPH--hemoprotein reductase] + H2O + H(+). It carries out the reaction (-)-vincadifformine + reduced [NADPH--hemoprotein reductase] + O2 = (-)-minovincinine + oxidized [NADPH--hemoprotein reductase] + H2O + H(+). It participates in alkaloid biosynthesis. In terms of biological role, component of the monoterpenoid indole alkaloids (MIAs, e.g. echitovenine, tabersonine, lochnericine, 19-hydroxytabersonine and horhammericine) biosynthetic pathway; MIAs are used in cancer treatment and other medical applications. Cytochrome P450 catalyzing the conversion of (-)-tabersonine to 19-hydroxytabersonine, of lochnericine to horhammericine and of (-)-vincadifformine to (-)-minovincinine. In Catharanthus roseus (Madagascar periwinkle), this protein is Tabersonine/lochnericine 19-hydroxylase.